A 28-amino-acid chain; its full sequence is M-ectatotoxin-Eb2c (28 aa).

As to expression, expressed by the venom gland.

Its subcellular location is the secreted. In terms of biological role, antimicrobial peptide active against Gram-negative bacterium E.coli MH1 (MIC=3.5 uM) and P.aeruginosa PAO1 (MIC=10 uM) and against Gram-positive bacterium A.globiformis VKM Ac-1112 (MIC=1.25 uM). The polypeptide is M-ectatotoxin-Eb2c (Ectatomma brunneum (Ant)).